Consider the following 255-residue polypeptide: Probable esterase ATEG_07663 (255 aa).

Catalysis depends on charge relay system residues Ser-122, Asp-200, and His-227.

This sequence belongs to the LovG family.

Its function is as follows. Probable esterase; part of the cluster B that mediates the biosynthesis of azasperpyranones, members of the azaphilone family that exhibit anti-cancer activities. Azasperpyranones are synthesized by 2 clusters, A and B. Cluster A is responsible for the production of the polyhydric phenol moiety while the azaphilonoid scaffold is produced by the cluster B. The non-reducing polyketide synthase ATEG_03629 produces 5-methyl orsellinic acid, which is then reduced to 5-methyl orsellinic aldehyde by the NRPS-like protein ATEG_03630. 5-methyl orsellinic aldehyde is then first hydroxylated by the FAD-dependent monooxygenase ATEG_03635 and subsequently hydroxylated by the cytochrome P450 monooxygenase ATEG_03631 to produce the unstable polyhydric phenol precursor of azasperpyranones. On the other hand, the polyketide synthase ATEG_07659 is responsible for producing the 3,5-dimethyloctadienone moiety from acetyl-CoA, three malonyl-CoA, and two S-adenosyl methionines (SAM). The 3,5-dimethyloctadienone moiety is then loaded onto the SAT domain of ATEG_07661 and extended with four malonyl-CoA and one SAM, which leads to the formation of 2,4-dihydroxy-6-(5,7-dimethyl-2-oxo-trans-3-trans-5-nonadienyl)-3-methylbenzaldehyde (compound 8) after reductive release and aldol condensation. The FAD-dependent monooxygenase ATEG_07662 is the next enzyme in the biosynthesis sequence and hydroxylates the side chain at the benzylic position of compound 8. In Aspergillus nidulans, afoF, the ortholog of the FAD-dependent oxygenase ATEG_07660, is the key enzyme for the biosynthesis of asperfuranone by catalyzing the hydroxylation at C-8 of to prevent the formation of a six-membered ring hemiacetal intermediate and thus facilitating the formation of a five-membered ring to produce asperfuranone. In Aspergillus terreus, ATEG_07660 is probably not functional, which leads to the formation of the six-membered ring hemiacetal intermediate presperpyranone instead of asperfuranone. Finally, ATEG_03636 is involved in the condensation of the polyhydric phenol moiety produced by cluster A and the perasperpyranone precursor produced by cluster B, to yield azasperpyranone A. Further modifications of azasperpyranone A result in the production of derivatives, including azasperpyranone B to F. This chain is Probable esterase ATEG_07663, found in Aspergillus terreus (strain NIH 2624 / FGSC A1156).